The following is a 75-amino-acid chain: uncharacterized protein (75 aa).

Its subcellular location is the plastid. It is found in the chloroplast. This is an uncharacterized protein from Calycanthus floridus var. glaucus (Eastern sweetshrub).